We begin with the raw amino-acid sequence, 538 residues long: MATTTQPQNILMDEPLNLPNNSAHNNNYGNINANIRTFAGMSMHMHPARLNSLEFLHKPRRLSNVKLHRLPQDELQRNTDMNKGMYFNGKQVHAHHPFINSGANFNAHHQDVSKLGEEEDEISPLSHDNFQYESEENGNPSPPIYKKSGELVKSSLKRRSKSLPITPKSIFNKTGSKSKHVNLDHVDTRLLQRSKSVHFDRVLPIKLFNENEKPIDVGKQMVQQDVLNFKHKPLTRLSALNGGSDSVPIEDLLSENNQNEYGDTWLQNPKGVFLFGTNSNNRRNKKKKFKLSDDDSDIENDNDSDDAINRLVRQQDKDQAHLAHGLKNLLINDDDDYLETRTNSAKSGANLFIGNSKRIVGLYNKNFPILSDRNRKSLKLNIFLNLSRGRPVFLQEITLLTGFHNMVIIGKVFVKNIYFDKKIIVRYTWDAWRTFHESECVYFSNANGILPGSNMDIFKFSIDDIHNPNDKDSNISQLEFCIQYLTWGVDRSRKEYWDNNDSANYKIDVVTNETRTGPTTDVNDNYEMKHSLFRNPFH.

Residues Ser-162, Ser-196, Ser-296, and Ser-304 each carry the phosphoserine modification. In terms of domain architecture, CBM21 spans 384–508 (LNLSRGRPVF…NNDSANYKID (125 aa)).

Functionally, interacts with glycogen synthase 2 (GSY2); possibly also interacts with phosphatase 1 (GLC7). This is GSY2-interacting protein PIG2 (PIG2) from Saccharomyces cerevisiae (strain ATCC 204508 / S288c) (Baker's yeast).